Here is an 891-residue protein sequence, read N- to C-terminus: Mating-type protein A-alpha Y1 (891 aa).

The homeobox DNA-binding region spans 146-205 (SKKPRPKFHSEYTPLLELYFRFNAYPTYADRRVLAEKTGMLTRQITVWFQNHRRRAKGPL). Disordered regions lie at residues 241-291 (PITL…PSTL), 319-339 (DIEM…LPKG), 393-437 (TRKP…RRVS), 610-718 (ARRK…EQSL), and 800-822 (MNWT…GGDE). The segment covering 244 to 257 (LGNNKTPDLTTSSR) has biased composition (polar residues). Over residues 328–337 (PKRRKMKKLP) the composition is skewed to basic residues. Low complexity predominate over residues 427 to 437 (ASSTVPSRRVS). Residues 627-638 (KKDKKERKKAGL) are compositionally biased toward basic residues. Low complexity-rich tracts occupy residues 651 to 667 (VSSR…TSAR) and 676 to 710 (QPSS…SMPS). Polar residues predominate over residues 800 to 818 (MNWTASVGSNAQDPASQES).

It localises to the nucleus. Its function is as follows. Specifies A-alpha-1 mating-type. May regulate the expression of genes specific to the homokaryotic cell type. This chain is Mating-type protein A-alpha Y1, found in Schizophyllum commune (Split gill fungus).